Reading from the N-terminus, the 131-residue chain is Small ribosomal subunit protein uS8 (131 aa).

Belongs to the universal ribosomal protein uS8 family. Part of the 30S ribosomal subunit. Contacts proteins S5 and S12.

Its function is as follows. One of the primary rRNA binding proteins, it binds directly to 16S rRNA central domain where it helps coordinate assembly of the platform of the 30S subunit. In Ruminiclostridium cellulolyticum (strain ATCC 35319 / DSM 5812 / JCM 6584 / H10) (Clostridium cellulolyticum), this protein is Small ribosomal subunit protein uS8.